Consider the following 366-residue polypeptide: Lipase member J (366 aa).

Residue Ser141 is the Nucleophile of the active site. Residues Asp312 and His341 each act as charge relay system in the active site.

It belongs to the AB hydrolase superfamily. Lipase family.

This chain is Lipase member J (LIPJ), found in Homo sapiens (Human).